The chain runs to 261 residues: MRRTVKDFRNAKGQRLVYLTAYDYPTARLAEAAGVDAILVGDSLGMVVLGYPSTVPVTLEEMLHHTKAARRGAPETFLVADLPYLAYATLDRALLAAERLLKEGGADAVKLEGGEEVAEIVRGLVRAGVPVLGHVGLTPQTASQLGGYKLQGRRPEEAERILKGALALEEAGAYGVVLEMVPARLAKEVTERLSVHTVGIGAGPHTDAQVLVFHDVVGLYGDFKPRFVKRYLEAGRLIQEALSRYAQEVREGVFPGEEHSF.

Asp42 and Asp81 together coordinate Mg(2+). 3-methyl-2-oxobutanoate-binding positions include 42 to 43 (DS), Asp81, and Lys110. Residue Glu112 participates in Mg(2+) binding. Glu179 serves as the catalytic Proton acceptor.

Belongs to the PanB family. In terms of assembly, homodecamer; pentamer of dimers. The cofactor is Mg(2+).

The protein localises to the cytoplasm. It catalyses the reaction 3-methyl-2-oxobutanoate + (6R)-5,10-methylene-5,6,7,8-tetrahydrofolate + H2O = 2-dehydropantoate + (6S)-5,6,7,8-tetrahydrofolate. Its pathway is cofactor biosynthesis; (R)-pantothenate biosynthesis; (R)-pantoate from 3-methyl-2-oxobutanoate: step 1/2. In terms of biological role, catalyzes the reversible reaction in which hydroxymethyl group from 5,10-methylenetetrahydrofolate is transferred onto alpha-ketoisovalerate to form ketopantoate. In Thermus thermophilus (strain ATCC BAA-163 / DSM 7039 / HB27), this protein is 3-methyl-2-oxobutanoate hydroxymethyltransferase.